The following is a 360-amino-acid chain: MKPSIYGLTRDELIAWAIDNGQKAFRATQIWDWLYRKRVQSFDEMTNISKEFLAILKDSFCINPLKQRVAQESADGTVKYLFELPDGMLIETVLMRQHYGQSVCVTTQVGCNIGCTFCASGLIKKQRDLNSGEITAQIMMVQNYFDQRGQDERVSHVVVMGIGEPFDNYQNVMTFLRTINDDHGLAIGARHITVSTSGLAHKIREFANEGVQVNLAVSLHAPNNELRSSIMRINRSFPLDKLFSAIEYYIETTNRRVTFEYIMLNKVNDGVEQAQELADLTKRIRKLSYVNLIPYNPVSEHDQYSRSPKERVAAFYDILKKNGVNCVVRQEHGTDIDAACGQLRSNTMKKDRQKAATART.

Glutamate 91 functions as the Proton acceptor in the catalytic mechanism. In terms of domain architecture, Radical SAM core spans 97-335 (QHYGQSVCVT…CVVRQEHGTD (239 aa)). Cysteine 104 and cysteine 340 are oxidised to a cystine. [4Fe-4S] cluster contacts are provided by cysteine 111, cysteine 115, and cysteine 118. S-adenosyl-L-methionine is bound by residues 163 to 164 (GE), serine 195, 218 to 220 (SLH), and asparagine 296. The active-site S-methylcysteine intermediate is cysteine 340.

Belongs to the radical SAM superfamily. RlmN family. Requires [4Fe-4S] cluster as cofactor.

It is found in the cytoplasm. It carries out the reaction adenosine(2503) in 23S rRNA + 2 reduced [2Fe-2S]-[ferredoxin] + 2 S-adenosyl-L-methionine = 2-methyladenosine(2503) in 23S rRNA + 5'-deoxyadenosine + L-methionine + 2 oxidized [2Fe-2S]-[ferredoxin] + S-adenosyl-L-homocysteine. It catalyses the reaction adenosine(37) in tRNA + 2 reduced [2Fe-2S]-[ferredoxin] + 2 S-adenosyl-L-methionine = 2-methyladenosine(37) in tRNA + 5'-deoxyadenosine + L-methionine + 2 oxidized [2Fe-2S]-[ferredoxin] + S-adenosyl-L-homocysteine. Functionally, specifically methylates position 2 of adenine 2503 in 23S rRNA and position 2 of adenine 37 in tRNAs. This Streptococcus equi subsp. zooepidemicus (strain H70) protein is Probable dual-specificity RNA methyltransferase RlmN.